A 271-amino-acid polypeptide reads, in one-letter code: Regulatory protein RecX (271 aa).

The protein belongs to the RecX family.

The protein localises to the cytoplasm. In terms of biological role, modulates RecA activity. The protein is Regulatory protein RecX of Lactobacillus gasseri (strain ATCC 33323 / DSM 20243 / BCRC 14619 / CIP 102991 / JCM 1131 / KCTC 3163 / NCIMB 11718 / NCTC 13722 / AM63).